The primary structure comprises 479 residues: Carbohydrate sulfotransferase 3 (479 aa).

Residues 1-20 lie on the Cytoplasmic side of the membrane; that stretch reads MEKGLTLPQDCRDFVHSLKM. Residues 21–38 form a helical; Signal-anchor for type II membrane protein membrane-spanning segment; sequence RSKYALFLVFVVIVFVFI. Residues 39-479 lie on the Lumenal side of the membrane; the sequence is EKENKIISRV…LEERGTFWVT (441 aa). Residues Asn63, Asn74, and Asn96 are each glycosylated (N-linked (GlcNAc...) asparagine). Residues 108–128 are disordered; that stretch reads EAAGEEEEEQRKEEEPPRPAV. 141-147 provides a ligand contact to 3'-phosphoadenylyl sulfate; sequence TRTGSSF. The N-linked (GlcNAc...) asparagine glycan is linked to Asn256. Residue 301-309 participates in 3'-phosphoadenylyl sulfate binding; the sequence is RDPRAVLAS. N-linked (GlcNAc...) asparagine glycosylation is found at Asn420 and Asn464.

The protein belongs to the sulfotransferase 1 family. Gal/GlcNAc/GalNAc subfamily. In terms of processing, N-glycosylated. In terms of tissue distribution, widely expressed in adult tissues. Expressed in heart, placenta, skeletal muscle and pancreas. Also expressed in various immune tissues such as spleen, lymph node, thymus and appendix.

It localises to the golgi apparatus membrane. It carries out the reaction chondroitin beta-D-glucuronate + n 3'-phosphoadenylyl sulfate = chondroitin 6'-sulfate + n adenosine 3',5'-bisphosphate + n H(+). It catalyses the reaction 3'-phosphoadenylyl sulfate + keratan = adenosine 3',5'-bisphosphate + keratan 6'-sulfate.. Its function is as follows. Sulfotransferase that utilizes 3'-phospho-5'-adenylyl sulfate (PAPS) as sulfonate donor to catalyze the transfer of sulfate to position 6 of the N-acetylgalactosamine (GalNAc) residue of chondroitin. Chondroitin sulfate constitutes the predominant proteoglycan present in cartilage and is distributed on the surfaces of many cells and extracellular matrices. Catalyzes with a lower efficiency the sulfation of Gal residues of keratan sulfate, another glycosaminoglycan. Can also catalyze the sulfation of the Gal residues in sialyl N-acetyllactosamine (sialyl LacNAc) oligosaccharides. May play a role in the maintenance of naive T-lymphocytes in the spleen. The chain is Carbohydrate sulfotransferase 3 (CHST3) from Homo sapiens (Human).